The chain runs to 482 residues: UDP-N-acetylmuramoyl-L-alanyl-D-glutamate--2,6-diaminopimelate ligase (482 aa).

Ser30 is a binding site for UDP-N-acetyl-alpha-D-muramoyl-L-alanyl-D-glutamate. 111-117 provides a ligand contact to ATP; that stretch reads GTNGKTT. UDP-N-acetyl-alpha-D-muramoyl-L-alanyl-D-glutamate-binding positions include 153 to 154, Ser180, Gln186, and Arg188; that span reads TT. An N6-carboxylysine modification is found at Lys220. Meso-2,6-diaminopimelate contacts are provided by residues Arg378, 402–405, Gly455, and Glu459; that span reads DNPR. The short motif at 402 to 405 is the Meso-diaminopimelate recognition motif element; it reads DNPR.

Belongs to the MurCDEF family. MurE subfamily. It depends on Mg(2+) as a cofactor. Post-translationally, carboxylation is probably crucial for Mg(2+) binding and, consequently, for the gamma-phosphate positioning of ATP.

Its subcellular location is the cytoplasm. The enzyme catalyses UDP-N-acetyl-alpha-D-muramoyl-L-alanyl-D-glutamate + meso-2,6-diaminopimelate + ATP = UDP-N-acetyl-alpha-D-muramoyl-L-alanyl-gamma-D-glutamyl-meso-2,6-diaminopimelate + ADP + phosphate + H(+). Its pathway is cell wall biogenesis; peptidoglycan biosynthesis. In terms of biological role, catalyzes the addition of meso-diaminopimelic acid to the nucleotide precursor UDP-N-acetylmuramoyl-L-alanyl-D-glutamate (UMAG) in the biosynthesis of bacterial cell-wall peptidoglycan. This chain is UDP-N-acetylmuramoyl-L-alanyl-D-glutamate--2,6-diaminopimelate ligase, found in Bacteroides thetaiotaomicron (strain ATCC 29148 / DSM 2079 / JCM 5827 / CCUG 10774 / NCTC 10582 / VPI-5482 / E50).